The following is a 431-amino-acid chain: uncharacterized protein (431 aa).

2 4Fe-4S ferredoxin-type domains span residues 336-367 (VRPV…NGLD) and 362-391 (IDNG…MDTG).

This is an uncharacterized protein from Methanothermobacter thermautotrophicus (strain ATCC 29096 / DSM 1053 / JCM 10044 / NBRC 100330 / Delta H) (Methanobacterium thermoautotrophicum).